Here is a 357-residue protein sequence, read N- to C-terminus: uncharacterized protein (357 aa).

Serine 72 is subject to Phosphoserine. 3 disordered regions span residues 79–98 (GVNE…RPSR), 264–290 (QKQL…GASV), and 323–357 (ISDE…EPLK). A compositionally biased stretch (acidic residues) spans 324 to 335 (SDEDEEDEEEDS).

This is an uncharacterized protein from Saccharomyces cerevisiae (strain ATCC 204508 / S288c) (Baker's yeast).